Reading from the N-terminus, the 104-residue chain is Flagellar hook-basal body complex protein FliE (104 aa).

It belongs to the FliE family.

The protein resides in the bacterial flagellum basal body. This is Flagellar hook-basal body complex protein FliE from Edwardsiella ictaluri (strain 93-146).